We begin with the raw amino-acid sequence, 93 residues long: Hematopoietic cell signal transducer (93 aa).

The signal sequence occupies residues 1–18; that stretch reads MIHLGHILFLLLLPVAAA. Residues 19–48 lie on the Extracellular side of the membrane; sequence QTTPGERSSLPAFYPGTSGSCSGCGSLSLP. A helical membrane pass occupies residues 49–69; it reads LLAGLVAADAVASLLIVGAVF. Topologically, residues 70 to 93 are cytoplasmic; that stretch reads LCARPRRSPAQEDGKVYINMPGRG. Tyr-86 is subject to Phosphotyrosine. A GRB2 binding site region spans residues 86-88; sequence YIN. The PIK3R1 binding site stretch occupies residues 86 to 89; it reads YINM.

It belongs to the DAP10 family. Interacts with CLEC5A. Forms an CLEC5A/TYROBP/HCST trimolecular complex depending almost solely on TYROBP. Homodimer; Disulfide-linked. Heterohexamer composed of four subunits of HCST/DAP10 and two subunits of KLRK1. Interacts (via transmembrane domain) with KLRK1 (via transmembrane domain); the interaction is required for KLRK1 NK cell surface and induces NK cell-mediated cytotoxicity. Interacts with PIK3R1 and GRB2. Interacts with CD300H. Phosphorylated; PIK3R1 and GRB2 associate specifically with tyrosine-phosphorylated HCST. Post-translationally, O-glycosylated. Predominantly expressed in hemopoietic cells such as NK cells, subset of T-cells and monocytes. Detected in leukocytes, spleen, and thymus.

It is found in the membrane. In terms of biological role, transmembrane adapter protein which associates with KLRK1 to form an activation receptor KLRK1-HCST in lymphoid and myeloid cells; this receptor plays a major role in triggering cytotoxicity against target cells expressing cell surface ligands such as MHC class I chain-related MICA and MICB, and UL16-binding proteins (ULBPs); these ligands are up-regulated by stress conditions and pathological state such as viral infection and tumor transformation. Functions as a docking site for PI3-kinase PIK3R1 and GRB2. Interaction of ULBPs with KLRK1-HCST triggers calcium mobilization and activation of the PIK3R1, MAP2K/ERK, and JAK2/STAT5 signaling pathways. Both PIK3R1 and GRB2 are required for full KLRK1-HCST-mediated activation and ultimate killing of target cells. In NK cells, KLRK1-HCST signaling directly induces cytotoxicity and enhances cytokine production initiated via DAP12/TYROBP-associated receptors. In T-cells, it provides primarily costimulation for TCR-induced signals. KLRK1-HCST receptor plays a role in immune surveillance against tumors and is required for cytolysis of tumors cells; indeed, melanoma cells that do not express KLRK1 ligands escape from immune surveillance mediated by NK cells. This is Hematopoietic cell signal transducer (HCST) from Homo sapiens (Human).